The chain runs to 188 residues: Ribosome hibernation promotion factor (188 aa).

A disordered region spans residues 93 to 125 (KTRVNRKKRKESEHEPFPATPETPPETAVDHDK).

This sequence belongs to the HPF/YfiA ribosome-associated protein family. Long HPF subfamily. Interacts with 100S ribosomes.

It localises to the cytoplasm. Functionally, required for dimerization of active 70S ribosomes into 100S ribosomes in stationary phase; 100S ribosomes are translationally inactive and sometimes present during exponential growth. In Staphylococcus carnosus (strain TM300), this protein is Ribosome hibernation promotion factor.